The following is a 681-amino-acid chain: Anaphase-promoting complex subunit 2 (681 aa).

It belongs to the cullin family. In terms of assembly, the APC/C is composed of at least 13 subunits: apc1, apc2, nuc2, apc4, apc5, cut9, apc8, apc10, apc11, hcn1, apc13, apc14 and apc15.

Functionally, component of the anaphase-promoting complex/cyclosome (APC/C), a cell cycle-regulated E3 ubiquitin-protein ligase complex that controls progression through mitosis and the G1 phase of the cell cycle. The APC/C is thought to confer substrate specificity and, in the presence of ubiquitin-conjugating E2 enzymes, it catalyzes the formation of protein-ubiquitin conjugates that are subsequently degraded by the 26S proteasome. This Schizosaccharomyces pombe (strain 972 / ATCC 24843) (Fission yeast) protein is Anaphase-promoting complex subunit 2 (apc2).